A 454-amino-acid chain; its full sequence is UDP-N-acetylmuramoylalanine--D-glutamate ligase (454 aa).

An ATP-binding site is contributed by 114–120 (GTNGKTT).

It belongs to the MurCDEF family.

The protein resides in the cytoplasm. It catalyses the reaction UDP-N-acetyl-alpha-D-muramoyl-L-alanine + D-glutamate + ATP = UDP-N-acetyl-alpha-D-muramoyl-L-alanyl-D-glutamate + ADP + phosphate + H(+). Its pathway is cell wall biogenesis; peptidoglycan biosynthesis. Its function is as follows. Cell wall formation. Catalyzes the addition of glutamate to the nucleotide precursor UDP-N-acetylmuramoyl-L-alanine (UMA). This chain is UDP-N-acetylmuramoylalanine--D-glutamate ligase, found in Desulfitobacterium hafniense (strain Y51).